Consider the following 252-residue polypeptide: MSGGEKEMPTNKERSPRYNRILLKLSGEALAGEEGFGIDPKVLDAISLEIGQLVGIGVQVGLVVGGGNLFRGAALQSAGLDRVAGDHMGMLATVMNGLALRDALERSNIRTRLMSAIPMSGVVEHYDHRNANRHLKNGEVVIFCAGTGNPFFTTDSAACLRGIEISADVVLKATKVDGVYNDDPVKNPDAVKYDALTYDEVLEKKLGVMDLTAICLCRDHSMPLRVFDMNKKGALLNLMLGGKEGTLVEAAQ.

Residue 24 to 27 coordinates ATP; the sequence is KLSG. Residues 32-37 are involved in allosteric activation by GTP; it reads GEEGFG. A UMP-binding site is contributed by Gly66. Positions 67 and 71 each coordinate ATP. Residues Asp86 and 147 to 154 contribute to the UMP site; that span reads TGNPFFTT. Thr174, Tyr180, and Asp183 together coordinate ATP.

This sequence belongs to the UMP kinase family. Homohexamer.

It localises to the cytoplasm. It catalyses the reaction UMP + ATP = UDP + ADP. Its pathway is pyrimidine metabolism; CTP biosynthesis via de novo pathway; UDP from UMP (UMPK route): step 1/1. With respect to regulation, allosterically activated by GTP. Inhibited by UTP. Catalyzes the reversible phosphorylation of UMP to UDP. The protein is Uridylate kinase of Alcanivorax borkumensis (strain ATCC 700651 / DSM 11573 / NCIMB 13689 / SK2).